The chain runs to 637 residues: Biosynthetic arginine decarboxylase (637 aa).

N6-(pyridoxal phosphate)lysine is present on Lys-101. Position 286–296 (286–296) interacts with substrate; that stretch reads FDVGGGLAVDY.

The protein belongs to the Orn/Lys/Arg decarboxylase class-II family. SpeA subfamily. Requires Mg(2+) as cofactor. Pyridoxal 5'-phosphate is required as a cofactor.

It carries out the reaction L-arginine + H(+) = agmatine + CO2. The protein operates within amine and polyamine biosynthesis; agmatine biosynthesis; agmatine from L-arginine: step 1/1. In terms of biological role, catalyzes the biosynthesis of agmatine from arginine. The protein is Biosynthetic arginine decarboxylase of Shewanella sediminis (strain HAW-EB3).